A 1536-amino-acid chain; its full sequence is Ferredoxin-dependent glutamate synthase (1536 aa).

C27 acts as the For GATase activity in catalysis. A Glutamine amidotransferase type-2 domain is found at 27-427; the sequence is CGVGFIANLN…PGQMLCVDLS (401 aa). 1105–1162 contacts FMN; the sequence is LAEVHTTLVENSLREKVILRVDGGLRTGKDIIIAALMGAEEFGFGTVAMIATGCVMAR. Positions 1158, 1164, and 1169 each coordinate [3Fe-4S] cluster.

The protein belongs to the glutamate synthase family. As to quaternary structure, monomer. [3Fe-4S] cluster serves as cofactor. FAD is required as a cofactor. The cofactor is FMN.

Its subcellular location is the plastid. The protein resides in the chloroplast stroma. It carries out the reaction 2 oxidized [2Fe-2S]-[ferredoxin] + 2 L-glutamate = L-glutamine + 2 reduced [2Fe-2S]-[ferredoxin] + 2-oxoglutarate + 2 H(+). The protein operates within amino-acid biosynthesis; L-glutamate biosynthesis via GLT pathway; L-glutamate from 2-oxoglutarate and L-glutamine (ferredoxin route): step 1/1. It functions in the pathway energy metabolism; nitrogen metabolism. In Antithamnion sp. (Red alga), this protein is Ferredoxin-dependent glutamate synthase (gltB).